Here is a 173-residue protein sequence, read N- to C-terminus: Plasmolipin (173 aa).

Residues 1–34 (MADFPGKVSTQTSSQEPQRSFAISSSVDMGFIKS) are Cytoplasmic-facing. Residues 31 to 160 (FIKSIPGILL…SSYFAYLGWR (130 aa)) form the MARVEL domain. Residues 35–55 (IPGILLIAEIVVGLLVWTLIA) form a helical membrane-spanning segment. Residues 56 to 67 (STPHYLIPALGW) lie on the Extracellular side of the membrane. The chain crosses the membrane as a helical span at residues 68-88 (VLFVSITLWLLSIALLVILLL). Residues 89-98 (SLHQRLPSVP) lie on the Cytoplasmic side of the membrane. A helical transmembrane segment spans residues 99-119 (WPLVLLVFYSVAALLYLTAFL). Topologically, residues 120–138 (ANAATVPGGYYQGHLGASA) are extracellular. A helical transmembrane segment spans residues 139–159 (FFGIVETLLYTASSYFAYLGW). Residues 160–173 (RGEGQNAAGSTVPV) lie on the Cytoplasmic side of the membrane.

This sequence belongs to the MAL family. Forms oligomers. As to expression, expressed in the posterior midgut.

The protein resides in the cell membrane. It localises to the myelin membrane. It is found in the apical cell membrane. Its subcellular location is the recycling endosome membrane. The protein localises to the vesicle. In terms of biological role, main component of the myelin sheath that plays an important role in myelin membrane biogenesis and myelination. Plays an essential function in apical endocytosis. Plays an important role by activating the Notch signaling pathway, which is essential for cell differentiation and results in correct patterning of the intestinal epithelium, particularly of the posterior gut absorptive cells. This Danio rerio (Zebrafish) protein is Plasmolipin (pllp).